We begin with the raw amino-acid sequence, 259 residues long: Flagellar L-ring protein (259 aa).

The signal sequence occupies residues 1-15; that stretch reads MKRISLIALVTIMSG. C16 is lipidated: N-palmitoyl cysteine. Residue C16 is the site of S-diacylglycerol cysteine attachment.

The protein belongs to the FlgH family. The basal body constitutes a major portion of the flagellar organelle and consists of four rings (L,P,S, and M) mounted on a central rod.

Its subcellular location is the cell outer membrane. The protein localises to the bacterial flagellum basal body. Assembles around the rod to form the L-ring and probably protects the motor/basal body from shearing forces during rotation. The chain is Flagellar L-ring protein from Vibrio vulnificus (strain CMCP6).